Here is a 415-residue protein sequence, read N- to C-terminus: E3 ubiquitin-protein ligase RNF135 (415 aa).

An RING-type zinc finger spans residues 21 to 67 (CIICQGLLDWPTTLPCGHSFCLQCLKDLWVSKRAGVDSCPWACPICR). Residues 181-206 (TFSASQKKIQEILRDLEKIQETLQGS) adopt a coiled-coil conformation. Residues 228 to 415 (PDQRYPVSRK…LTPGNYLEIL (188 aa)) form the B30.2/SPRY domain.

Homodimer. Interacts (homodimer) with RIGI (double-stranded RNA-bound oligomeric form); involved in both RIGI ubiquitination, oligomerization into filaments associated with viral RNAs and the bridging of these filaments. Interacts with UBE2D3 and UBE2N; E2 ubiquitin ligases involved in RNF135-mediated ubiquitination of RIGI and activation of the RIG-I signaling pathway. Interacts with PCBP2.

The protein resides in the cytoplasm. Its subcellular location is the stress granule. The enzyme catalyses S-ubiquitinyl-[E2 ubiquitin-conjugating enzyme]-L-cysteine + [acceptor protein]-L-lysine = [E2 ubiquitin-conjugating enzyme]-L-cysteine + N(6)-ubiquitinyl-[acceptor protein]-L-lysine.. Its pathway is protein modification; protein ubiquitination. In terms of biological role, E2-dependent E3 ubiquitin-protein ligase that functions as a RIGI coreceptor in the sensing of viral RNAs in cell cytoplasm and the activation of the antiviral innate immune response. Together with the UBE2D3, UBE2N and UB2V1 E2 ligases, catalyzes the 'Lys-63'-linked polyubiquitination of RIGI oligomerized on viral RNAs, an essential step in the activation of the RIG-I signaling pathway. Through a ubiquitin-independent parallel mechanism, which consists in bridging RIGI filaments forming on longer viral RNAs, further activates the RIG-I signaling pathway. This second mechanism that synergizes with the ubiquitin-dependent one would thereby allow an RNA length-dependent regulation of the RIG-I signaling pathway. Associated with the E2 ligase UBE2N, also constitutively synthesizes unanchored 'Lys-63'-linked polyubiquitin chains that may also activate the RIG-I signaling pathway. The protein is E3 ubiquitin-protein ligase RNF135 of Rattus norvegicus (Rat).